The chain runs to 546 residues: Phosphoglucomutase (546 aa).

Ser135 functions as the Phosphoserine intermediate in the catalytic mechanism. Positions 135, 288, 290, and 292 each coordinate Mg(2+).

Belongs to the phosphohexose mutase family. Requires Mg(2+) as cofactor.

The enzyme catalyses alpha-D-glucose 1-phosphate = alpha-D-glucose 6-phosphate. It functions in the pathway glycolipid metabolism; diglucosyl-diacylglycerol biosynthesis. In terms of biological role, catalyzes the interconversion between glucose-6-phosphate and alpha-glucose-1-phosphate. This is the first step in the biosynthesis of diglucosyl-diacylglycerol (Glc2-DAG), i.e. a glycolipid found in the membrane, which is also used as a membrane anchor for lipoteichoic acid (LTA). In Staphylococcus epidermidis (strain ATCC 35984 / DSM 28319 / BCRC 17069 / CCUG 31568 / BM 3577 / RP62A), this protein is Phosphoglucomutase (pgcA).